The primary structure comprises 381 residues: MAIDPVILSQELISFPSITPTDNGAIDFLSNTLSQYGFTCNVLTFGNDEVQVCNLYAQLGNGHPNLCFAGHTDVVPTGDLEKWKFDPFSGHIEDNILYGRGAVDMKSAICAFIAAVSRIDFNQVNGAISLMISGDEEGNHFKYGTPAILKWLTDNNKKIDYCLVGEPTSKSSVGDTIKIGRRGSINFKIVCNGVQGHVAYPHLAQNPINDMINILHKINNTVLDEGNEYFQPSNCEITSVDVGNTANNVIPGTVTAHLNIRYNNIHTSESLFNIINNICAETTQKYQIFTSLSGDPFINYPDKYSDMLSAAIKKTTGETAVISTSGGTSDARFIKDFCPVIELGLKNDTAHKINENTSVDDINKLANIYEEFIKQFFNISQ.

A Zn(2+)-binding site is contributed by H71. Residue D73 is part of the active site. Position 104 (D104) interacts with Zn(2+). The Proton acceptor role is filled by E136. Zn(2+) is bound by residues E137, E166, and H351.

It belongs to the peptidase M20A family. DapE subfamily. In terms of assembly, homodimer. The cofactor is Zn(2+). Co(2+) serves as cofactor.

The enzyme catalyses N-succinyl-(2S,6S)-2,6-diaminopimelate + H2O = (2S,6S)-2,6-diaminopimelate + succinate. It functions in the pathway amino-acid biosynthesis; L-lysine biosynthesis via DAP pathway; LL-2,6-diaminopimelate from (S)-tetrahydrodipicolinate (succinylase route): step 3/3. Its function is as follows. Catalyzes the hydrolysis of N-succinyl-L,L-diaminopimelic acid (SDAP), forming succinate and LL-2,6-diaminopimelate (DAP), an intermediate involved in the bacterial biosynthesis of lysine and meso-diaminopimelic acid, an essential component of bacterial cell walls. The polypeptide is Succinyl-diaminopimelate desuccinylase (Ehrlichia chaffeensis (strain ATCC CRL-10679 / Arkansas)).